The primary structure comprises 752 residues: Multifunctional tryptophan biosynthesis protein (752 aa).

The Glutamine amidotransferase type-1 domain occupies 23–223 (NVILIDNYDS…LELTAGTWDN (201 aa)). 74 to 76 (GPG) contacts L-glutamine. Cysteine 102 serves as the catalytic Nucleophile; for GATase activity. L-glutamine-binding positions include glutamine 106 and 152–153 (SL). Catalysis depends on for GATase activity residues histidine 197 and glutamate 199. The tract at residues 239–503 (ILDKIYAHRK…DTSAFVAQLL (265 aa)) is indole-3-glycerol phosphate synthase. Residues 519-752 (LVKICGTRTE…FVKSAKSIRQ (234 aa)) are N-(5'-phosphoribosyl)anthranilate isomerase.

It catalyses the reaction N-(5-phospho-beta-D-ribosyl)anthranilate = 1-(2-carboxyphenylamino)-1-deoxy-D-ribulose 5-phosphate. The enzyme catalyses 1-(2-carboxyphenylamino)-1-deoxy-D-ribulose 5-phosphate + H(+) = (1S,2R)-1-C-(indol-3-yl)glycerol 3-phosphate + CO2 + H2O. The catalysed reaction is chorismate + L-glutamine = anthranilate + pyruvate + L-glutamate + H(+). It participates in amino-acid biosynthesis; L-tryptophan biosynthesis; L-tryptophan from chorismate: step 1/5. It functions in the pathway amino-acid biosynthesis; L-tryptophan biosynthesis; L-tryptophan from chorismate: step 3/5. The protein operates within amino-acid biosynthesis; L-tryptophan biosynthesis; L-tryptophan from chorismate: step 4/5. Trifunctional enzyme bearing the Gln amidotransferase (GATase) domain of anthranilate synthase, indole-glycerolphosphate synthase, and phosphoribosylanthranilate isomerase activities. The sequence is that of Multifunctional tryptophan biosynthesis protein (trpC) from Penicillium chrysogenum (Penicillium notatum).